The chain runs to 432 residues: Short/branched chain specific acyl-CoA dehydrogenase, mitochondrial (432 aa).

The N-terminal 33 residues, 1 to 33, are a transit peptide targeting the mitochondrion; it reads MERATVRLLRGGALLRRNFPSCLSSWKTPPHAL. Residue Lys70 is modified to N6-acetyllysine; alternate. Lys70 bears the N6-succinyllysine; alternate mark. FAD contacts are provided by residues 174–183 and 207–209; these read ICISETGAGS and WIS. Position 183 (Ser183) interacts with substrate. Ser183 bears the Phosphoserine mark. Substrate is bound by residues Tyr229 and Tyr283. Lys284 carries the post-translational modification N6-acetyllysine; alternate. An N6-succinyllysine; alternate modification is found at Lys284. 291-294 lines the substrate pocket; it reads NEGR. Residues Arg319, Gln330, and 387 to 391 contribute to the FAD site; that span reads EWMGG. Glu414 acts as the Proton acceptor in catalysis. 416 to 418 lines the FAD pocket; that stretch reads TSN. Lys426 is modified (N6-acetyllysine).

It belongs to the acyl-CoA dehydrogenase family. Homotetramer. FAD is required as a cofactor.

Its subcellular location is the mitochondrion matrix. It carries out the reaction 2-methylbutanoyl-CoA + oxidized [electron-transfer flavoprotein] + H(+) = (2E)-2-methylbut-2-enoyl-CoA + reduced [electron-transfer flavoprotein]. The catalysed reaction is (2S)-2-methylbutanoyl-CoA + oxidized [electron-transfer flavoprotein] + H(+) = (2E)-2-methylbut-2-enoyl-CoA + reduced [electron-transfer flavoprotein]. The enzyme catalyses (2R)-2-methylbutanoyl-CoA + oxidized [electron-transfer flavoprotein] + H(+) = ethylacryloyl-CoA + reduced [electron-transfer flavoprotein]. It catalyses the reaction butanoyl-CoA + oxidized [electron-transfer flavoprotein] + H(+) = (2E)-butenoyl-CoA + reduced [electron-transfer flavoprotein]. It carries out the reaction 2-methylpropanoyl-CoA + oxidized [electron-transfer flavoprotein] + H(+) = 2-methylpropenoyl-CoA + reduced [electron-transfer flavoprotein]. The catalysed reaction is hexanoyl-CoA + oxidized [electron-transfer flavoprotein] + H(+) = (2E)-hexenoyl-CoA + reduced [electron-transfer flavoprotein]. The enzyme catalyses valproyl-CoA + oxidized [electron-transfer flavoprotein] + H(+) = (2E)-2-propylpent-2-enoyl-CoA + reduced [electron-transfer flavoprotein]. It participates in lipid metabolism; mitochondrial fatty acid beta-oxidation. It functions in the pathway amino-acid degradation; L-isoleucine degradation. Short and branched chain specific acyl-CoA dehydrogenase that catalyzes the removal of one hydrogen from C-2 and C-3 of the fatty acyl-CoA thioester, resulting in the formation of trans-2-enoyl-CoA. Among the different mitochondrial acyl-CoA dehydrogenases, acts specifically on short and branched chain acyl-CoA derivatives such as (S)-2-methylbutyryl-CoA as well as short straight chain acyl-CoAs such as butyryl-CoA. Plays an important role in the metabolism of L-isoleucine by catalyzing the dehydrogenation of 2-methylbutyryl-CoA, one of the steps of the L-isoleucine catabolic pathway. Can also act on valproyl-CoA, a metabolite of the valproic acid drug. This chain is Short/branched chain specific acyl-CoA dehydrogenase, mitochondrial (ACADSB), found in Bos taurus (Bovine).